The primary structure comprises 526 residues: MRTESIKTNRPMDLLLQYLQPISVALVVIALVWNYGRRNPTKKLAPEASGGRPIMGHLHLFNDGELTHRKLGAMADTYGPVFNIRFGSHKTLVVSDWEIVKECFTTNDKLFSNRPGTLGIKLMFYDADSVGYAPYGAYWRDLRKISTLKLLSNHRIDTIKHLRSSEVESCFESLYSQWGNGEKSGEFAPVRMDSWLGDLTFNVVARIVAGKKNFSANGDVGAQRYKAAMDEAMRLMRFFAFSDVIPSLSWLDNLRGLVREMKKCASEIDSIMATWVEEHRVKRNSGGNSQLEHDFIDVCLDIMEHSSLPGDDPDLVVKSTCLDMILGGSDTTTVTLTWAMSLLLNHPQVLQKAKEELETQVGKNRQVDDSDIPNLPFIQAIIKETMRLYPAGPLIERRTMEDCEVAGYQVPAGTRLLVNVWKMQRDGNVYKGDPLEFRPDRFLTSNADVDLKGQHYELIPFGAGRRICPGVSFAVQLMHLVLARLLHEFEITTVEPETKVDMAESGGLLCYKIMPLEVLIKPRLEI.

Residues 14-34 (LLLQYLQPISVALVVIALVWN) form a helical membrane-spanning segment. C468 lines the heme pocket.

It belongs to the cytochrome P450 family. Heme is required as a cofactor. As to expression, mainly expressed in roots, and barely in stems, leaves and carpels.

It is found in the membrane. It carries out the reaction (S)-cis-N-methylcanadine + reduced [NADPH--hemoprotein reductase] + O2 = allocryptopine + oxidized [NADPH--hemoprotein reductase] + H2O + 2 H(+). The enzyme catalyses (S)-cis-N-methylstylopine + reduced [NADPH--hemoprotein reductase] + O2 = protopine + oxidized [NADPH--hemoprotein reductase] + H2O + 2 H(+). It catalyses the reaction (S)-cis-N-methyltetrahydrothalifendine + reduced [NADPH--hemoprotein reductase] + O2 = 7-hydroxy-8-methoxy-11-methyl-17,19-dioxa-11-azatetracyclo[12.7.0.0(4,9).0(16,20)]henicosa-1(21),4(9),5,7,14,16(20)-hexaen-2-one + oxidized [NADPH--hemoprotein reductase] + H2O + 2 H(+). The catalysed reaction is (S)-cis-N-methyltetrahydropalmatine + reduced [NADPH--hemoprotein reductase] + O2 = muramine + oxidized [NADPH--hemoprotein reductase] + H2O + 2 H(+). Its pathway is alkaloid biosynthesis. Its activity is regulated as follows. Repressed by cytochrome P450 inhibitors ketoconazole, metyrapone, prochloraz, ancymidol and cytochrome C. Its function is as follows. Involved in the biosynthesis of the isoquinoline alkaloid sanguinarine. Catalyzes the conversion of N-methylated protoberberine alkaloids N-methylstylopine and N-methylcanadine into protopine and allocryptopine, respectively. Can also use (S)-cis-N-methyltetrahydrothalifendine and (S)-cis-N-methyltetrahydropalmatine as substrates. This Papaver somniferum (Opium poppy) protein is Methyltetrahydroprotoberberine 14-monooxygenase.